Consider the following 631-residue polypeptide: DNA mismatch repair protein MutL (631 aa).

The tract at residues 389–423 (GEREASRQAGGQRVQETQMSSYGSGQSGGRGRSYA) is disordered.

It belongs to the DNA mismatch repair MutL/HexB family.

Functionally, this protein is involved in the repair of mismatches in DNA. It is required for dam-dependent methyl-directed DNA mismatch repair. May act as a 'molecular matchmaker', a protein that promotes the formation of a stable complex between two or more DNA-binding proteins in an ATP-dependent manner without itself being part of a final effector complex. This Shewanella loihica (strain ATCC BAA-1088 / PV-4) protein is DNA mismatch repair protein MutL.